Here is a 178-residue protein sequence, read N- to C-terminus: CDP-archaeol synthase (178 aa).

5 helical membrane passes run 7-27 (LFVS…ACIF), 56-76 (FFGV…SNLG), 91-111 (VIIG…GSFL), 125-145 (VLDQ…YYLV), and 149-169 (ISIT…IIAY).

Belongs to the CDP-archaeol synthase family. Requires Mg(2+) as cofactor.

The protein resides in the cell membrane. The enzyme catalyses 2,3-bis-O-(geranylgeranyl)-sn-glycerol 1-phosphate + CTP + H(+) = CDP-2,3-bis-O-(geranylgeranyl)-sn-glycerol + diphosphate. Its pathway is membrane lipid metabolism; glycerophospholipid metabolism. Its function is as follows. Catalyzes the formation of CDP-2,3-bis-(O-geranylgeranyl)-sn-glycerol (CDP-archaeol) from 2,3-bis-(O-geranylgeranyl)-sn-glycerol 1-phosphate (DGGGP) and CTP. This reaction is the third ether-bond-formation step in the biosynthesis of archaeal membrane lipids. The protein is CDP-archaeol synthase of Methanococcus vannielii (strain ATCC 35089 / DSM 1224 / JCM 13029 / OCM 148 / SB).